The primary structure comprises 2211 residues: MFLACPGFWVLVVLGSSWAGWGNLGAEAAKLRQFYVAAQSIRWNYRPESTHLSSKPFETSFKKIVYREYEAYFQKEKPQSRTSGLLGPTLYAEVGDIMKVHFKNKAHKPLSIHAQGIKYSKFSEGASYSDHTLPMEKMDDAVAPGQEYTYEWIISEHSGPTHDDPPCLTHIYYSYVNLVEDFNSGLIGPLLICKKGTLTEDGTQKMFEKQHVLMFAVFDESKSWNQTSSLMYTVNGYVNGTMPDITVCAHDHISWHLIGMSSGPELFSIHFNGQVLEQNHHKISAITLVSATSTTANMTVSPEGRWTIASLIPRHFQAGMQAYIDIKNCAKKTRNPKKLTRDQRRHIKRWEYFIAAEEVIWDYAPIIPANMDKKYRSLHLDNFSNRIGKHYKKVVYKQYQDDSFTKRLEDPSSEGDGILGPIIRAQVRDTLKIVFKNMASRSYSIYPHGVTFSPYDNEVNSSSTSGSNTMIRAVRPGETYTYKWNILESDEPTENDAQCLTRPYYSNVDITRDLASGLIGLLLICKSRSLDRRGIQRAADIEQQAVFAVFDENKSWYIEDNIYKFCENPEKVKRDDPKFYESNIMSNFTLPAINGYVPESIPILGFCFDDTVQWHFCSVGTQNDILTIHFTGHSFIYGKRHEDTLTLFPMQGESVTVTMDNVGTWMLTTMNSNPRSKKLRLRFRDAKCIRNDDDDSYEIIYEPSGSTAMTTKKIHDSSEIEDENDADSDYQDELALILGLRSFRNSSLNQEKDELNLTALALEKDSEFIPPSANRSLDSNSSSRSHVSRLIAKNFAESLKTLLHLEAPAAGSPLEHAGLDKNSALNPPMAEHSSPYSEDPREDHPLSDVTGVSLLPFGTGFKNRKPAKHQRFQVGRGQAAKHKFSQTRFPAHKTRTRLSQDNSSSSRMGPWEDIPSDLLLLQQKDPYKILNGEWHLVSEKGSYEIIQDANENKTVNKLPNSPQNDSRTWGENIPFKNSHGKQSGHPTFLVTRRKPLQDRQDRRNSRLKEGLPLIRTRRKKKEEKPAYHVPLSPRSFHPLRGEVNASFSDRRHNHSLLLHASNETSLSIDLNQTFPSMNLSLAASLPDHDQTSPNDTTSQTSSPPDLYPTVSPEEHYQIFPIQDSDPTHSTTAPSNRSPDPTHSTTAPSNRSPPTQPSQIPNYDLRNRAIPTDVSQIFPSLELEVWQTATSLDLSQPSISPDLGQMALSPDPGQESLSPDLGQTSLSPDLSQESLSPDLGQTALSPDPSQESLSPDLGQTALSPDPSQESLSPDLGQTALSPDPGQESLSPDLGQTSLSPDLSQESLSPDLGQTALSPDPSQESLSPDLGQTALSPDPSQESLSPDLGQTSLSPDLGQESLSPDLGQTALSPDPSQESLSPDLGQTSLSPDLGQESLSPDLGQTALSPDLSQESLSPDLGQTPLSPDLSLESLSPDLSQLDLKQTSPPLDLNQTSHTSESSQSLPLPEFGQTFPNADIGQMPSPPPDSTLNNTFIPEEFNPLVVVGLSRDDGDYIEIIPRQKEESSEEDYGEFEFVAYNDPYQTDLRTDINSSRNPDNIAAWYLRSNTGNRKYYYIAAEEISWDYSKFVQSDDVDYVPEDTVYKKVVFRKYLDSTFTKLDPQGEYEEHLGILGPVIRAEVDDVIQVRFKNLASRPYSLHAHGLSYEKSSEGKTYEDDSPEWFKEDNAIQPNKTYTYVWHATTRSGPENPGSACRAWAYYSAVNPEKDIHSGLIGPLLICRKGTLDKETNMPVDMREFVLLFMVFDEKKSWYYDKKPTRSWRRASSEVKNSHEFHAINGMIYNLPGLRMYEQEWVRLHLLNLGGSRDIHVVHFHGQTLLENGTQQHQLGVWPLLPGSFKTLEMKASKPGWWLLDTEVGEIQRAGMQTPFLIVDRECKMPMGLSTGLIADSQIQASEFWGYWEPKLARLNNGGSYNAWIAEKLSTEFNPEPWIQVDMQKEVLLTGIQTQGAKHYLKPYYTTEFCVAYSLDRKNWRIFKGNSTRNVMYFGGNSDASTIKENQIDPPVVARYIRISPTGSYNKPALRLELQGCEVNGCSTPLGMESGKIENKQITASSFKKSWWGNYWEPFLARLNAQGRVNAWQAKANNNNQWLQIDLLKIKKITAIVTQGCKSLSSEMYVKSYTIHYSDQGTDWKPYREKSSMVDKIFEGNNNVRGHVKNFFNPPIISRFIRIIPKTWNQSIALRLELFGCDMY.

Positions 1-28 (MFLACPGFWVLVVLGSSWAGWGNLGAEA) are cleaved as a signal peptide. Plastocyanin-like domains lie at 30–193 (KLRQ…LLIC), 203–327 (TQKM…IDIK), 348–525 (KRWE…LLIC), and 535–686 (IQRA…FRDA). F5/8 type A domains follow at residues 30–327 (KLRQ…IDIK) and 348–686 (KRWE…FRDA). Residues D139 and D140 each coordinate Ca(2+). An intrachain disulfide couples C167 to C193. Residues N225, N239, N297, N382, and N460 are each glycosylated (N-linked (GlcNAc...) asparagine). C248 and C329 are joined by a disulfide. C499 and C525 are joined by a disulfide. N553 and N587 each carry an N-linked (GlcNAc...) asparagine glycan. An intrachain disulfide couples C607 to C688. A Phosphothreonine modification is found at T644. The segment at 696-1564 (SYEIIYEPSG…PDNIAAWYLR (869 aa)) is b. A sulfotyrosine mark is found at Y697, Y701, and Y730. Residues 742–1564 (SFRNSSLNQE…PDNIAAWYLR (823 aa)) constitute a propeptide, activation peptide (connecting region). N745, N756, N774, and N780 each carry an N-linked (GlcNAc...) asparagine glycan. A disordered region spans residues 814-844 (LEHAGLDKNSALNPPMAEHSSPYSEDPREDH). 3 N-linked (GlcNAc...) asparagine glycosylation sites follow: N902, N952, and N964. Polar residues predominate over residues 954–969 (TVNKLPNSPQNDSRTW). The segment at 954-1039 (TVNKLPNSPQ…PLSPRSFHPL (86 aa)) is disordered. The span at 995–1009 (PLQDRQDRRNSRLKE) shows a compositional bias: basic and acidic residues. N1044, N1053, N1062, N1071, N1078, and N1094 each carry an N-linked (GlcNAc...) asparagine glycan. Disordered regions lie at residues 1084–1162 (SLPD…IPNY) and 1195–1471 (QPSI…FGQT). 2 stretches are compositionally biased toward polar residues: residues 1091-1103 (TSPN…TSSP) and 1127-1160 (THST…SQIP). 30 consecutive repeat copies span residues 1124–1137 (SDPT…SNRS), 1138–1151 (PDPT…SNRS), 1188–1196 (ATSLDLSQP), 1197–1205 (SISPDLGQM), 1206–1214 (ALSPDPGQE), 1215–1223 (SLSPDLGQT), 1224–1232 (SLSPDLSQE), 1233–1241 (SLSPDLGQT), 1242–1250 (ALSPDPSQE), 1251–1259 (SLSPDLGQT), 1260–1268 (ALSPDPSQE), 1269–1277 (SLSPDLGQT), 1278–1286 (ALSPDPGQE), 1287–1295 (SLSPDLGQT), 1296–1304 (SLSPDLSQE), 1305–1313 (SLSPDLGQT), 1314–1322 (ALSPDPSQE), 1323–1331 (SLSPDLGQT), 1332–1340 (ALSPDPSQE), 1341–1349 (SLSPDLGQT), 1350–1358 (SLSPDLGQE), 1359–1367 (SLSPDLGQT), 1368–1376 (ALSPDPSQE), 1377–1385 (SLSPDLGQT), 1386–1394 (SLSPDLGQE), 1395–1403 (SLSPDLGQT), 1404–1412 (ALSPDLSQE), 1413–1421 (SLSPDLGQT), 1422–1430 (PLSPDLSLE), and 1431–1439 (SLSPDLSQL). Residues 1124–1151 (SDPTHSTTAPSNRSPDPTHSTTAPSNRS) form a 2 X 14 AA tandem repeats region. Residues 1188–1453 (ATSLDLSQPS…TSPPLDLNQT (266 aa)) form a 30 X 9 AA approximate tandem repeats of [AS]-L-S-P-D-[LP]-[GS]-Q-[TE] region. Composition is skewed to polar residues over residues 1214–1234 (ESLS…QESL), 1241–1252 (TALSPDPSQESL), 1259–1270 (TALSPDPSQESL), 1286–1306 (ESLS…QESL), 1313–1324 (TALSPDPSQESL), 1331–1352 (TALS…TSLS), 1367–1388 (TALS…TSLS), and 1403–1414 (TALSPDLSQESL). Over residues 1422-1441 (PLSPDLSLESLSPDLSQLDL) the composition is skewed to low complexity. One copy of the 2-29; truncated repeat lies at 1440 to 1444 (DLKQT). Positions 1442–1463 (KQTSPPLDLNQTSHTSESSQSL) are enriched in polar residues. One copy of the 2-30 repeat lies at 1445–1453 (SPPLDLNQT). 2 N-linked (GlcNAc...) asparagine glycosylation sites follow: N1451 and N1490. Residues Y1513, Y1529, Y1537, and Y1541 each carry the sulfotyrosine modification. N-linked (GlcNAc...) asparagine glycosylation is found at N1550 and N1690. Plastocyanin-like domains follow at residues 1569–1738 (NRKY…LLIC) and 1748–1890 (NMPV…FLIV). Residues 1569–1890 (NRKYYYIAAE…AGMQTPFLIV (322 aa)) enclose the F5/8 type A 3 domain. An intrachain disulfide couples C1712 to C1738. The Cu cation site is built by H1830 and H1832. A glycan (N-linked (GlcNAc...) asparagine) is linked at N1839. Cu cation is bound at residue D1872. Cystine bridges form between C1894–C2048 and C2053–C2208. 2 consecutive F5/8 type C domains span residues 1894-2048 (CKMP…LQGC) and 2053-2208 (CSTP…LFGC). N-linked (GlcNAc...) asparagine glycans are attached at residues N1997 and N2196.

It belongs to the multicopper oxidase family. In terms of assembly, factor Va, the activated form of factor V, is composed of a heavy chain and a light chain, non-covalently bound. The interaction between the two chains is calcium-dependent. Forms heterodimer with SERPINA5. Thrombin activates factor V proteolytically to the active cofactor, factor Va (formation of a heavy chain at the N-terminus and a light chain at the C-terminus). In terms of processing, sulfation is required for efficient thrombin cleavage and activation and for full procoagulant activity. Post-translationally, activated protein C inactivates factor V and factor Va by proteolytic degradation.

It localises to the secreted. With respect to regulation, inhibited by SERPINA5. Functionally, central regulator of hemostasis. It serves as a critical cofactor for the prothrombinase activity of factor Xa that results in the activation of prothrombin to thrombin. This Bos taurus (Bovine) protein is Coagulation factor V (F5).